Here is a 116-residue protein sequence, read N- to C-terminus: Ribonuclease P protein component (116 aa).

This sequence belongs to the RnpA family. In terms of assembly, consists of a catalytic RNA component (M1 or rnpB) and a protein subunit.

It carries out the reaction Endonucleolytic cleavage of RNA, removing 5'-extranucleotides from tRNA precursor.. RNaseP catalyzes the removal of the 5'-leader sequence from pre-tRNA to produce the mature 5'-terminus. It can also cleave other RNA substrates such as 4.5S RNA. The protein component plays an auxiliary but essential role in vivo by binding to the 5'-leader sequence and broadening the substrate specificity of the ribozyme. This is Ribonuclease P protein component from Acholeplasma laidlawii (strain PG-8A).